A 171-amino-acid chain; its full sequence is Crossover junction endodeoxyribonuclease RuvC (171 aa).

Active-site residues include aspartate 11, glutamate 71, and aspartate 143. Positions 11, 71, and 143 each coordinate Mg(2+).

This sequence belongs to the RuvC family. In terms of assembly, homodimer which binds Holliday junction (HJ) DNA. The HJ becomes 2-fold symmetrical on binding to RuvC with unstacked arms; it has a different conformation from HJ DNA in complex with RuvA. In the full resolvosome a probable DNA-RuvA(4)-RuvB(12)-RuvC(2) complex forms which resolves the HJ. It depends on Mg(2+) as a cofactor.

The protein resides in the cytoplasm. It carries out the reaction Endonucleolytic cleavage at a junction such as a reciprocal single-stranded crossover between two homologous DNA duplexes (Holliday junction).. Its function is as follows. The RuvA-RuvB-RuvC complex processes Holliday junction (HJ) DNA during genetic recombination and DNA repair. Endonuclease that resolves HJ intermediates. Cleaves cruciform DNA by making single-stranded nicks across the HJ at symmetrical positions within the homologous arms, yielding a 5'-phosphate and a 3'-hydroxyl group; requires a central core of homology in the junction. The consensus cleavage sequence is 5'-(A/T)TT(C/G)-3'. Cleavage occurs on the 3'-side of the TT dinucleotide at the point of strand exchange. HJ branch migration catalyzed by RuvA-RuvB allows RuvC to scan DNA until it finds its consensus sequence, where it cleaves and resolves the cruciform DNA. This Bartonella tribocorum (strain CIP 105476 / IBS 506) protein is Crossover junction endodeoxyribonuclease RuvC.